Reading from the N-terminus, the 77-residue chain is UPF0401 protein c3666 (77 aa).

It belongs to the UPF0401 family.

This is UPF0401 protein c3666 from Escherichia coli O6:H1 (strain CFT073 / ATCC 700928 / UPEC).